We begin with the raw amino-acid sequence, 102 residues long: Large ribosomal subunit protein bL21 (102 aa).

Belongs to the bacterial ribosomal protein bL21 family. Part of the 50S ribosomal subunit. Contacts protein L20.

Functionally, this protein binds to 23S rRNA in the presence of protein L20. In Bifidobacterium longum (strain DJO10A), this protein is Large ribosomal subunit protein bL21.